The sequence spans 78 residues: Probable Vpr-like protein (78 aa).

Residues 35–43 (AIRLLQGLF) carry the Nuclear export signal motif. The short motif at 45 to 54 (RYRFKKPRVD) is the Nuclear localization signal element.

It localises to the virion. It is found in the host nucleus. Functionally, seems to function as a Vpr-like protein, since it mediates host cell cycle arrest in G2 phase. Cell cycle arrest creates a favorable environment for maximizing viral expression and production. The protein is Probable Vpr-like protein of Feline immunodeficiency virus (isolate Petaluma) (FIV).